The following is a 157-amino-acid chain: Large ribosomal subunit protein uL11 (157 aa).

The protein belongs to the universal ribosomal protein uL11 family. In terms of assembly, part of the ribosomal stalk of the 50S ribosomal subunit. Interacts with L10 and the large rRNA to form the base of the stalk. L10 forms an elongated spine to which L12 dimers bind in a sequential fashion forming a multimeric L10(L12)X complex.

Functionally, forms part of the ribosomal stalk which helps the ribosome interact with GTP-bound translation factors. This Archaeoglobus fulgidus (strain ATCC 49558 / DSM 4304 / JCM 9628 / NBRC 100126 / VC-16) protein is Large ribosomal subunit protein uL11.